Reading from the N-terminus, the 281-residue chain is Ribosomal RNA small subunit methyltransferase A (281 aa).

Asn36, Leu38, Gly63, Glu84, Asp109, and Asn127 together coordinate S-adenosyl-L-methionine.

This sequence belongs to the class I-like SAM-binding methyltransferase superfamily. rRNA adenine N(6)-methyltransferase family. RsmA subfamily.

It localises to the cytoplasm. It carries out the reaction adenosine(1518)/adenosine(1519) in 16S rRNA + 4 S-adenosyl-L-methionine = N(6)-dimethyladenosine(1518)/N(6)-dimethyladenosine(1519) in 16S rRNA + 4 S-adenosyl-L-homocysteine + 4 H(+). Specifically dimethylates two adjacent adenosines (A1518 and A1519) in the loop of a conserved hairpin near the 3'-end of 16S rRNA in the 30S particle. May play a critical role in biogenesis of 30S subunits. This is Ribosomal RNA small subunit methyltransferase A from Borrelia garinii subsp. bavariensis (strain ATCC BAA-2496 / DSM 23469 / PBi) (Borreliella bavariensis).